The sequence spans 400 residues: Argininosuccinate synthase (400 aa).

8 to 16 serves as a coordination point for ATP; that stretch reads AYSGGLDTS. Tyr85 is a binding site for L-citrulline. Position 115 (Gly115) interacts with ATP. Positions 117, 121, and 122 each coordinate L-aspartate. L-citrulline is bound at residue Asn121. The L-citrulline site is built by Arg125, Ser173, Glu258, and Tyr270.

Belongs to the argininosuccinate synthase family. Type 1 subfamily. As to quaternary structure, homotetramer.

It localises to the cytoplasm. The catalysed reaction is L-citrulline + L-aspartate + ATP = 2-(N(omega)-L-arginino)succinate + AMP + diphosphate + H(+). It functions in the pathway amino-acid biosynthesis; L-arginine biosynthesis; L-arginine from L-ornithine and carbamoyl phosphate: step 2/3. The chain is Argininosuccinate synthase from Staphylococcus haemolyticus (strain JCSC1435).